The chain runs to 510 residues: ATP synthase subunit alpha (510 aa).

Residue glycine 169–threonine 176 coordinates ATP.

It belongs to the ATPase alpha/beta chains family. F-type ATPases have 2 components, CF(1) - the catalytic core - and CF(0) - the membrane proton channel. CF(1) has five subunits: alpha(3), beta(3), gamma(1), delta(1), epsilon(1). CF(0) has three main subunits: a(1), b(2) and c(9-12). The alpha and beta chains form an alternating ring which encloses part of the gamma chain. CF(1) is attached to CF(0) by a central stalk formed by the gamma and epsilon chains, while a peripheral stalk is formed by the delta and b chains.

Its subcellular location is the cell inner membrane. It catalyses the reaction ATP + H2O + 4 H(+)(in) = ADP + phosphate + 5 H(+)(out). Produces ATP from ADP in the presence of a proton gradient across the membrane. The alpha chain is a regulatory subunit. The polypeptide is ATP synthase subunit alpha (Anaeromyxobacter dehalogenans (strain 2CP-C)).